Here is a 231-residue protein sequence, read N- to C-terminus: NADH-ubiquinone oxidoreductase chain 4 (231 aa).

The next 6 membrane-spanning stretches (helical) occupy residues Pro-1–Ile-21, Thr-34–Leu-54, Ser-61–Ile-80, Trp-84–Leu-106, Ile-118–Leu-138, and Leu-156–Leu-178.

Belongs to the complex I subunit 4 family.

It is found in the mitochondrion membrane. It carries out the reaction a ubiquinone + NADH + 5 H(+)(in) = a ubiquinol + NAD(+) + 4 H(+)(out). Functionally, core subunit of the mitochondrial membrane respiratory chain NADH dehydrogenase (Complex I) that is believed to belong to the minimal assembly required for catalysis. Complex I functions in the transfer of electrons from NADH to the respiratory chain. The immediate electron acceptor for the enzyme is believed to be ubiquinone. This chain is NADH-ubiquinone oxidoreductase chain 4 (MT-ND4), found in Trimeresurus albolabris (White-lipped pit viper).